Here is a 478-residue protein sequence, read N- to C-terminus: Cytochrome c-552 (478 aa).

Residues methionine 1 to alanine 26 form the signal peptide. Heme c is bound at residue histidine 94. Residues cysteine 122, cysteine 125, and lysine 126 each contribute to the heme site. Heme c contacts are provided by cysteine 160, cysteine 163, histidine 164, cysteine 209, cysteine 212, and histidine 213. 4 residues coordinate Ca(2+): glutamate 215, tyrosine 216, lysine 261, and glutamine 263. Tyrosine 216 lines the substrate pocket. Histidine 264 is a binding site for substrate. The heme c site is built by histidine 275, cysteine 282, cysteine 285, histidine 286, histidine 301, cysteine 314, cysteine 317, histidine 318, and histidine 393.

The protein belongs to the cytochrome c-552 family. Requires Ca(2+) as cofactor. The cofactor is heme c.

It localises to the periplasm. The catalysed reaction is 6 Fe(III)-[cytochrome c] + NH4(+) + 2 H2O = 6 Fe(II)-[cytochrome c] + nitrite + 8 H(+). It functions in the pathway nitrogen metabolism; nitrate reduction (assimilation). In terms of biological role, catalyzes the reduction of nitrite to ammonia, consuming six electrons in the process. This is Cytochrome c-552 from Escherichia coli O6:H1 (strain CFT073 / ATCC 700928 / UPEC).